A 435-amino-acid polypeptide reads, in one-letter code: Nuclear hormone receptor family member nhr-136 (435 aa).

The segment at residues 50–129 (PSNCKVCRHS…AGMNPSAIQA (80 aa)) is a DNA-binding region (nuclear receptor). 2 consecutive NR C4-type zinc fingers follow at residues 53–73 (CKVCRHSATGYHYDVPSCNGC) and 89–112 (CLKMRKCLSGTEPVDLSRRMCRAC). In terms of domain architecture, NR LBD spans 194 to 430 (RDIRKLDELI…RYTRISNLYE (237 aa)).

It belongs to the nuclear hormone receptor family.

The protein localises to the nucleus. Functionally, orphan nuclear receptor. This is Nuclear hormone receptor family member nhr-136 (nhr-136) from Caenorhabditis elegans.